A 239-amino-acid chain; its full sequence is Probable transcriptional regulatory protein EF_2866 (239 aa).

It belongs to the TACO1 family. YeeN subfamily.

It localises to the cytoplasm. This is Probable transcriptional regulatory protein EF_2866 from Enterococcus faecalis (strain ATCC 700802 / V583).